The primary structure comprises 140 residues: Nucleoside diphosphate kinase (140 aa).

Residues lysine 11, phenylalanine 59, arginine 87, threonine 93, arginine 104, and asparagine 114 each contribute to the ATP site. The Pros-phosphohistidine intermediate role is filled by histidine 117.

The protein belongs to the NDK family. In terms of assembly, homotetramer. The cofactor is Mg(2+).

The protein localises to the cytoplasm. The enzyme catalyses a 2'-deoxyribonucleoside 5'-diphosphate + ATP = a 2'-deoxyribonucleoside 5'-triphosphate + ADP. The catalysed reaction is a ribonucleoside 5'-diphosphate + ATP = a ribonucleoside 5'-triphosphate + ADP. Functionally, major role in the synthesis of nucleoside triphosphates other than ATP. The ATP gamma phosphate is transferred to the NDP beta phosphate via a ping-pong mechanism, using a phosphorylated active-site intermediate. This Ruegeria pomeroyi (strain ATCC 700808 / DSM 15171 / DSS-3) (Silicibacter pomeroyi) protein is Nucleoside diphosphate kinase.